We begin with the raw amino-acid sequence, 387 residues long: DNA double-strand break repair protein Mre11 (387 aa).

4 residues coordinate Mn(2+): Asp11, His13, Asp52, and Asp87. His88 acts as the Proton donor in catalysis. Mn(2+) is bound by residues His159, His190, and His192.

Belongs to the MRE11/RAD32 family. Homodimer. Forms a heterotetramer composed of two Mre11 subunits and two Rad50 subunits. Interacts with HerA. It depends on Mn(2+) as a cofactor.

With respect to regulation, nuclease activity is regulated by Rad50. In terms of biological role, part of the Rad50/Mre11 complex, which is involved in the early steps of DNA double-strand break (DSB) repair. The complex may facilitate opening of the processed DNA ends to aid in the recruitment of HerA and NurA. Mre11 binds to DSB ends and has both double-stranded 3'-5' exonuclease activity and single-stranded endonuclease activity. This Sulfurisphaera tokodaii (strain DSM 16993 / JCM 10545 / NBRC 100140 / 7) (Sulfolobus tokodaii) protein is DNA double-strand break repair protein Mre11.